The sequence spans 113 residues: Protein MGF 110-2L (113 aa).

The N-terminal stretch at 1–31 (MGFFSYLGLVLVGLASLTSLASLANLQDFST) is a signal peptide.

Belongs to the asfivirus MGF 110 family.

Functionally, plays a role in virus cell tropism, and may be required for efficient virus replication in macrophages. This chain is Protein MGF 110-2L, found in African swine fever virus (isolate Pig/Kenya/KEN-50/1950) (ASFV).